Here is an 862-residue protein sequence, read N- to C-terminus: Leucine--tRNA ligase (862 aa).

Positions 49–59 match the 'HIGH' region motif; it reads PYPSGRIHMGH. Positions 625–629 match the 'KMSKS' region motif; it reads KMSKS. Lys628 lines the ATP pocket.

It belongs to the class-I aminoacyl-tRNA synthetase family.

Its subcellular location is the cytoplasm. It catalyses the reaction tRNA(Leu) + L-leucine + ATP = L-leucyl-tRNA(Leu) + AMP + diphosphate. The protein is Leucine--tRNA ligase of Paramagnetospirillum magneticum (strain ATCC 700264 / AMB-1) (Magnetospirillum magneticum).